Consider the following 1705-residue polypeptide: ALK tyrosine kinase receptor (1705 aa).

An N-terminal signal peptide occupies residues 1 to 21 (MIARILYFFLWSAAFLPELQC). Residues 22–1035 (ASQRTADALT…SLSHLALGLS (1014 aa)) lie on the Extracellular side of the membrane. 2 N-linked (GlcNAc...) asparagine glycosylation sites follow: asparagine 40 and asparagine 48. The tract at residues 54 to 76 (RIKRKTLSVDFAVPSLLRYYLAL) is heparin-binding region. N-linked (GlcNAc...) asparagine glycans are attached at residues asparagine 124, asparagine 259, asparagine 334, asparagine 434, asparagine 442, asparagine 458, asparagine 484, asparagine 578, asparagine 590, and asparagine 635. The region spanning 486-644 (SYCSFGREDC…NFTLSMECFL (159 aa)) is the MAM domain. A disulfide bridge connects residues cysteine 694 and cysteine 707. Asparagine 717 is a glycosylation site (N-linked (GlcNAc...) asparagine). Residues cysteine 788 and cysteine 799 are joined by a disulfide bond. N-linked (GlcNAc...) asparagine glycosylation is found at asparagine 808 and asparagine 881. The interval 842–892 (GGGRGYSSQSETPEEVMDRDPSIPGRNGKSGTAGGGGGWNDSAPVPQGGRP) is disordered. Cysteine 903 and cysteine 921 are joined by a disulfide. An N-linked (GlcNAc...) asparagine glycan is attached at asparagine 979. 2 cysteine pairs are disulfide-bonded: cysteine 980/cysteine 988 and cysteine 983/cysteine 997. The segment at 980-1016 (CSHCESGDCHETSEGMVCYCDEELTLAPDGVSCINST) is EGF-like. N-linked (GlcNAc...) asparagine glycosylation occurs at asparagine 1014. Residues 1036–1056 (VGTSALIAALLLAVSGVMIMY) traverse the membrane as a helical segment. The Cytoplasmic segment spans residues 1057 to 1705 (RRKHTELQSI…KMEGHNATVL (649 aa)). The region spanning 1113 to 1389 (ISLTRGLGHG…IDYCLQDPDV (277 aa)) is the Protein kinase domain. Residues 1119 to 1127 (LGHGAFGEV) and lysine 1147 each bind ATP. The active-site Proton acceptor is the aspartate 1246. 5 disordered regions span residues 1395–1499 (PVEY…GHVN), 1505–1524 (AHSSEKESRNRKPTNLWNPT), 1532–1557 (QQQKRQQVQAQRQTSGPRIPGEGQEQ), 1588–1613 (QQQQQQQQQQGLCRPLLPPPPPPAPT), and 1646–1681 (GLPMEPMQGPQLPPPHPGQQRPISLTRASGPEDSRP). The span at 1484 to 1493 (KPSSTTSNAQ) shows a compositional bias: polar residues. 2 stretches are compositionally biased toward low complexity: residues 1532–1544 (QQQKRQQVQAQRQ) and 1588–1602 (QQQQQQQQQQGLCRP). Residues 1603 to 1613 (LLPPPPPPAPT) show a composition bias toward pro residues.

The protein belongs to the protein kinase superfamily. Tyr protein kinase family. Insulin receptor subfamily. As to quaternary structure, homodimer; homodimerizes upon binding to alkal ligands (alkal1, alkal2a or alkal2b). In terms of tissue distribution, highly expressed in the developing central nervous system: highly expressed in brain, with much lower expression in heart, caudal fin and testis.

Its subcellular location is the cell membrane. It catalyses the reaction L-tyrosyl-[protein] + ATP = O-phospho-L-tyrosyl-[protein] + ADP + H(+). Its activity is regulated as follows. Inhibited by ALK inhibitor TAE684. In terms of biological role, receptor tyrosine kinase required for neurogenesis in the developing central nervous system. Following activation by alkal ligands (alkal1, alkal2a or alkal2b) at the cell surface, transduces an extracellular signal into an intracellular response. Ligand-binding to the extracellular domain induces tyrosine kinase activation, resulting in the activation of the mitogen-activated protein kinase (MAPK) pathway. Phosphorylates almost exclusively at the first tyrosine of the Y-x-x-x-Y-Y motif. The protein is ALK tyrosine kinase receptor of Danio rerio (Zebrafish).